The primary structure comprises 563 residues: CDKN2A-interacting protein (563 aa).

A2 is modified (N-acetylalanine). The 108-residue stretch at 19–126 (VETLRCEGET…KVKKRGISSS (108 aa)) folds into the XRN2-binding (XTBD) domain. Disordered regions lie at residues 122-289 (GISS…LLGS) and 304-351 (SSSE…PSLL). A Phosphoserine modification is found at S124. A compositionally biased stretch (basic and acidic residues) spans 147–160 (VERDHGKKSAKTDR). 2 stretches are compositionally biased toward low complexity: residues 168 to 216 (SSPS…SSQV) and 234 to 248 (SASF…SMNS). K177 is covalently cross-linked (Glycyl lysine isopeptide (Lys-Gly) (interchain with G-Cter in SUMO1)). S234 carries the post-translational modification Phosphoserine. Over residues 249-262 (HMTQSTDNRQQSGS) the composition is skewed to polar residues. Over residues 270–280 (GSSGSASQSSS) the composition is skewed to low complexity. T340 carries the phosphothreonine modification. Position 371 is a phosphoserine (S371). A DRBM domain is found at 445-520 (NHGELLNAAI…SREALKLFLK (76 aa)).

This sequence belongs to the CARF family. As to quaternary structure, interacts with CDKN2A/p14ARF, p53/TP53 and MDM2. Interacts with CHEK2 and MAPK3. Interacts with XRN2. In terms of processing, may be ubiquitinated.

The protein resides in the nucleus. The protein localises to the nucleoplasm. Its function is as follows. Regulates DNA damage response and cell proliferation in a dose-dependent manner through a number of signaling pathways involved in cell proliferation, apoptosis and senescence. The protein is CDKN2A-interacting protein (Cdkn2aip) of Mus musculus (Mouse).